A 261-amino-acid chain; its full sequence is Prostate-specific antigen (261 aa).

An N-terminal signal peptide occupies residues methionine 1–alanine 17. The propeptide at alanine 18–arginine 24 is activation peptide. The Peptidase S1 domain maps to isoleucine 25–valine 258. Disulfide bonds link cysteine 31/cysteine 173, cysteine 50/cysteine 66, cysteine 152/cysteine 219, cysteine 184/cysteine 198, and cysteine 209/cysteine 234. Histidine 65 acts as the Charge relay system in catalysis. Asparagine 69 is a glycosylation site (N-linked (GlcNAc...) asparagine). The Charge relay system role is filled by aspartate 120. Serine 213 acts as the Charge relay system in catalysis.

This sequence belongs to the peptidase S1 family. Kallikrein subfamily. Forms a heterodimer with SERPINA5.

It is found in the secreted. The catalysed reaction is Preferential cleavage: -Tyr-|-Xaa-.. With respect to regulation, inhibited by SERPINA5. Activity is strongly inhibited by Zn2+, 100 times more abundant in semen than in serum. This inhibition is relieved by exposure to semenogelins, which are avid zinc binders. Functionally, hydrolyzes semenogelin-1 thus leading to the liquefaction of the seminal coagulum. This Homo sapiens (Human) protein is Prostate-specific antigen (KLK3).